A 2378-amino-acid polypeptide reads, in one-letter code: Serine/threonine-protein kinase ATM (2378 aa).

Residues 1415–1937 (LSARKRNTMM…LHTILMYDDE (523 aa)) enclose the FAT domain. Positions 2044–2366 (WKDVFTIADG…LLREATSADN (323 aa)) constitute a PI3K/PI4K catalytic domain. The tract at residues 2050-2056 (IADGIST) is G-loop. Residues 2218-2226 (GLGDRHASN) are catalytic loop. Residues 2238–2263 (HIDLGMILEYSKRTLPVPEQVPFRIT) form an activation loop region. In terms of domain architecture, FATC spans 2346–2378 (TAQSSNLQIRRLLREATSADNLSRMFCGWMPFL).

The protein belongs to the PI3/PI4-kinase family. ATM subfamily.

The protein localises to the nucleus. It carries out the reaction L-seryl-[protein] + ATP = O-phospho-L-seryl-[protein] + ADP + H(+). The enzyme catalyses L-threonyl-[protein] + ATP = O-phospho-L-threonyl-[protein] + ADP + H(+). Its function is as follows. Serine/threonine protein kinase which activates checkpoint signaling in the presence of DNA double strand breaks (DSBs) and other forms of DNA damage induced by ionizing radiation and other genotoxic stresses such as UV. Plays a role in maintaining genome stability. This Caenorhabditis elegans protein is Serine/threonine-protein kinase ATM (atm-1).